A 273-amino-acid chain; its full sequence is Zinc finger protein 80 (273 aa).

2 consecutive C2H2-type zinc fingers follow at residues 49-71 (YKCK…HQIH) and 77-99 (YECQ…MRIH). A C2H2-type 3; atypical zinc finger spans residues 105-127 (CKCVECGKVFNRRSHLLCYRQIH). 4 C2H2-type zinc fingers span residues 133-155 (YECS…RMTH), 161-183 (FGCK…MKIH), 189-211 (YKCG…SMTH), and 217-239 (YECK…TRSH).

Belongs to the krueppel C2H2-type zinc-finger protein family.

Its subcellular location is the nucleus. May be involved in transcriptional regulation. The chain is Zinc finger protein 80 (ZNF80) from Gorilla gorilla gorilla (Western lowland gorilla).